A 1149-amino-acid polypeptide reads, in one-letter code: Bone sialoprotein-binding protein (1149 aa).

The first 52 residues, 1 to 52, serve as a signal peptide directing secretion; the sequence is MINRDNKKAITKKGMISNRLNKFSIRKYTVGTASILVGTTLIFGLGNQEAKA. Residues 53 to 601 form a ligand binding A region region; the sequence is AENTSTENAK…GDGTVKPEEK (549 aa). Disordered regions lie at residues 54–249 and 675–697; these read ENTS…TAPT and LPTKENGTTDGEKDSNGSSVTVK. Residues 61–75 show a composition bias toward basic and acidic residues; the sequence is AKQDEASASDNKEVV. Polar residues predominate over residues 77-89; the sequence is ETENNSTQKNDLT. The span at 92–106 shows a compositional bias: basic and acidic residues; that stretch reads IKKETNTDSHQEAKE. Residues 109–126 are compositionally biased toward low complexity; it reads TTSSTQQQQNNATTSTET. A compositionally biased stretch (basic and acidic residues) spans 130–145; the sequence is NIEKENVKPSTDKTAT. The segment covering 158-205 has biased composition (polar residues); the sequence is PNNTNNDVTTKPSTSEIQTTPTTPQESTNIENSQPQPTPSKVDNQVTD. Residues 216–241 show a composition bias toward basic and acidic residues; the sequence is SKEELKNNPEKLKELVRNDSNTDRST. 3 CNA-B domains span residues 602–714, 715–824, and 825–935; these read LYKI…YKEP, KYNL…YKTP, and KYSL…EEDT. The segment at 896 to 1124 is disordered; the sequence is TQTGTNTTED…TGSENNGSNN (229 aa). Acidic residues-rich tracts occupy residues 903 to 913 and 930 to 1088; these read TEDDKDADGGE and YFEE…DSDS. Positions 1112 to 1116 match the LPXTG sorting signal motif; it reads LPETG. Position 1115 is a pentaglycyl murein peptidoglycan amidated threonine (Thr1115). Positions 1116 to 1149 are cleaved as a propeptide — removed by sortase; sequence GSENNGSNNATLFGGLFAALGSLLLFGRRKKQNK.

This sequence belongs to the serine-aspartate repeat-containing protein (SDr) family.

The protein localises to the secreted. It localises to the cell wall. In terms of biological role, specifically interacts with bone sialoprotein (BSP), a glycoprotein of bone and dentin extracellular matrix. Could contribute to staphylococcal osteomyelitis and arthritis. This chain is Bone sialoprotein-binding protein (bbp), found in Staphylococcus aureus.